Here is a 469-residue protein sequence, read N- to C-terminus: 3-isopropylmalate dehydratase large subunit (469 aa).

Cysteine 349, cysteine 410, and cysteine 413 together coordinate [4Fe-4S] cluster.

Belongs to the aconitase/IPM isomerase family. LeuC type 1 subfamily. In terms of assembly, heterodimer of LeuC and LeuD. The cofactor is [4Fe-4S] cluster.

It catalyses the reaction (2R,3S)-3-isopropylmalate = (2S)-2-isopropylmalate. It functions in the pathway amino-acid biosynthesis; L-leucine biosynthesis; L-leucine from 3-methyl-2-oxobutanoate: step 2/4. Functionally, catalyzes the isomerization between 2-isopropylmalate and 3-isopropylmalate, via the formation of 2-isopropylmaleate. The protein is 3-isopropylmalate dehydratase large subunit of Neisseria meningitidis serogroup A / serotype 4A (strain DSM 15465 / Z2491).